The following is a 421-amino-acid chain: ATP-dependent RNA helicase RhlB (421 aa).

A Q motif motif is present at residues 9–37 (QKFSDFSLHPKVVEALEKKGFHNCTPIQA). The 180-residue stretch at 40 to 219 (LPLTLAGRDV…FEQMNNAEYI (180 aa)) folds into the Helicase ATP-binding domain. 53–60 (AQTGTGKT) contacts ATP. The DEAD box motif lies at 165 to 168 (DEAD). The Helicase C-terminal domain occupies 245-390 (RLLQTLIEEE…VSKYNPDALM (146 aa)). The segment at 392-421 (DLPKPLRLTRPRTGNGPRRTGAPRNRRRSG) is disordered. The span at 402-414 (PRTGNGPRRTGAP) shows a compositional bias: low complexity.

Belongs to the DEAD box helicase family. RhlB subfamily. In terms of assembly, component of the RNA degradosome, which is a multiprotein complex involved in RNA processing and mRNA degradation.

The protein localises to the cytoplasm. It carries out the reaction ATP + H2O = ADP + phosphate + H(+). DEAD-box RNA helicase involved in RNA degradation. Has RNA-dependent ATPase activity and unwinds double-stranded RNA. In Shigella dysenteriae serotype 1 (strain Sd197), this protein is ATP-dependent RNA helicase RhlB.